Reading from the N-terminus, the 346-residue chain is MANAYKQAGVDIEAGYEAVSRMKKHVQTTMRKEVLGGLGGFGGMFDLSKFALEEPVLVSGTDGVGTKLMLAFMADKHDTIGIDAVAMCVNDIVVQGAEPLFFLDYIACGKAEPSKIENIVKGISEGCRQAGCALIGGETAEMPGMYSTEEYDLAGFTVGIVDKKKIVTGEKIEAGHVLIGLASSGIHSNGYSLVRKVLLEDGELSLDRIYGRLELPLGEELLKPTKIYVKPILELLKNHEVYGMAHITGGGFIENIPRMLPEGIGAEIELGSWEIQPIFSLLQEVGKLEEKEMFNIFNMGIGMVVAVKEEDAKDIVRLLGEQGETARIIGRTVQGAGVTFNGGKAL.

The protein belongs to the AIR synthase family.

The protein localises to the cytoplasm. It catalyses the reaction 2-formamido-N(1)-(5-O-phospho-beta-D-ribosyl)acetamidine + ATP = 5-amino-1-(5-phospho-beta-D-ribosyl)imidazole + ADP + phosphate + H(+). The protein operates within purine metabolism; IMP biosynthesis via de novo pathway; 5-amino-1-(5-phospho-D-ribosyl)imidazole from N(2)-formyl-N(1)-(5-phospho-D-ribosyl)glycinamide: step 2/2. The chain is Phosphoribosylformylglycinamidine cyclo-ligase from Bacillus cereus (strain ZK / E33L).